The primary structure comprises 509 residues: Maturase K (509 aa).

This sequence belongs to the intron maturase 2 family. MatK subfamily.

Its subcellular location is the plastid. It is found in the chloroplast. Usually encoded in the trnK tRNA gene intron. Probably assists in splicing its own and other chloroplast group II introns. This Cicer arietinum (Chickpea) protein is Maturase K.